The chain runs to 548 residues: SH2/SH3 adapter protein dreadlocks (548 aa).

Disordered stretches follow at residues isoleucine 12 to asparagine 37, glutamine 57 to serine 92, and glycine 113 to glycine 146. The segment covering glutamine 20–asparagine 37 has biased composition (low complexity). The span at glycine 113–serine 122 shows a compositional bias: gly residues. Positions glycine 123–glycine 135 are enriched in low complexity. One can recognise an SH3 1 domain in the interval aspartate 150 to proline 209. Positions valine 219–proline 247 are disordered. Positions threonine 227–methionine 242 are enriched in polar residues. SH3 domains lie at glutamate 252 to aspartate 311 and asparagine 324 to aspartate 386. Residues serine 398–asparagine 442 form a disordered region. The segment covering asparagine 401–asparagine 417 has biased composition (gly residues). An SH2 domain is found at tryptophan 448–leucine 542.

As to quaternary structure, interacts (via SH2 and SH3 domains) with Dscam1 (via cytoplasmic domain); the interaction is direct and requires Dscam1 to be phosphorylated. Interacts (via SH2 and SH3 domains) with InR/Insulin-like receptor (via C-terminal cytoplasmic region); the interaction requires InR kinase activity, probably for autophosphorylation stimulated by insulin signaling. Interacts with Ptp61F (via C-terminus); this interaction is independent of insulin stimulation. Interacts (via SH3 domain 2) with Pak (via N-terminal PXXP motif). Phosphorylated by Src42A and possibly by other tyrosine kinases. Constitutively dephosphorylated by its binding partner Ptp61F.

The protein localises to the perikaryon. It is found in the cell projection. The protein resides in the axon. It localises to the growth cone. Adapter protein that links cell surface receptor tyrosine phosphorylation to downstream signaling pathways and effectors, many of which are involved in regulation of the actin cytoskeleton. Recruited by Dscam1/Down syndrome cell adhesion molecule homolog and InR/insulin-like receptor. Recruits Pak to membranes, probably when dock/dreadlocks is associated with activated receptors. Required for guidance and targeting of photoreceptor (R cell) axon projections but not for axon outgrowth, differentiation or target induction in the developing eye. As part of a signaling pathway that involves the lbm/late bloomer protein, involved in synapse formation of the RP3 motorneuron at the muscle 7/6 cleft, probably by stimulating axon defasciculation from other SNb neurons. In Drosophila melanogaster (Fruit fly), this protein is SH2/SH3 adapter protein dreadlocks.